A 425-amino-acid polypeptide reads, in one-letter code: Serine--tRNA ligase (425 aa).

228-230 (TAE) lines the L-serine pocket. An ATP-binding site is contributed by 259–261 (RSE). Position 282 (glutamate 282) interacts with L-serine. 346–349 (EIAS) is an ATP binding site. Residue serine 382 participates in L-serine binding.

The protein belongs to the class-II aminoacyl-tRNA synthetase family. Type-1 seryl-tRNA synthetase subfamily. Homodimer. The tRNA molecule binds across the dimer.

The protein resides in the cytoplasm. It carries out the reaction tRNA(Ser) + L-serine + ATP = L-seryl-tRNA(Ser) + AMP + diphosphate + H(+). The catalysed reaction is tRNA(Sec) + L-serine + ATP = L-seryl-tRNA(Sec) + AMP + diphosphate + H(+). It functions in the pathway aminoacyl-tRNA biosynthesis; selenocysteinyl-tRNA(Sec) biosynthesis; L-seryl-tRNA(Sec) from L-serine and tRNA(Sec): step 1/1. In terms of biological role, catalyzes the attachment of serine to tRNA(Ser). Is also able to aminoacylate tRNA(Sec) with serine, to form the misacylated tRNA L-seryl-tRNA(Sec), which will be further converted into selenocysteinyl-tRNA(Sec). The chain is Serine--tRNA ligase from Rickettsia prowazekii (strain Madrid E).